A 198-amino-acid polypeptide reads, in one-letter code: Protein hunchback (198 aa).

Disordered regions lie at residues 16 to 111 and 152 to 198; these read SHHH…LPGL and NDKL…KYMA. Positions 17–31 are enriched in basic residues; the sequence is HHHHHHHAHHSHHQH. Composition is skewed to low complexity over residues 35 to 46 and 56 to 83; these read SNSNSNASSPHQ and SNTN…QQQQ. Positions 95 to 105 are enriched in polar residues; that stretch reads PSPSNNDQNSP. Over residues 179-198 the composition is skewed to basic and acidic residues; sequence EPEKEHDLMSNSSEDMKYMA.

The protein belongs to the hunchback C2H2-type zinc-finger protein family.

It is found in the nucleus. Functionally, gap class segmentation protein that controls development of head structures. In Drosophila lineosetae (Fruit fly), this protein is Protein hunchback (hb).